A 757-amino-acid chain; its full sequence is Receptor protein kinase-like protein At4g34220 (757 aa).

A signal peptide spans 1 to 26; it reads MTSNRSNLLFSLVLFHFLFVPTQLQA. 7 LRR repeats span residues 104–126, 128–150, 152–174, 176–198, 199–219, 220–242, and 245–267; these read YLRI…VFNA, ELQS…VNSV, NLQL…ISLL, NLTV…FEAA, QILD…LGGK, SLHY…FAEK, and ANAT…LSLL. The chain crosses the membrane as a helical span at residues 339–359; that stretch reads IAAITVADIVGLAFIGLLVLY. A Protein kinase domain is found at 471-753; the sequence is KASAYILGTT…KELVQVLEKI (283 aa). The residue at position 473 (S473) is a Phosphoserine. A Phosphothreonine modification is found at T494. A Phosphoserine modification is found at S553. The interval 633-654 is disordered; the sequence is ARESHTTGPTSSSPYQPPEWST. A phosphothreonine mark is found at T638 and T639. Residues 638–654 are compositionally biased toward polar residues; sequence TTGPTSSSPYQPPEWST.

It belongs to the protein kinase superfamily.

The protein localises to the membrane. The polypeptide is Receptor protein kinase-like protein At4g34220 (Arabidopsis thaliana (Mouse-ear cress)).